Here is a 361-residue protein sequence, read N- to C-terminus: Chorismate synthase (361 aa).

Residues Arg48 and Arg54 each coordinate NADP(+). Residues 125 to 127 (RSS), 238 to 239 (NA), Gly278, 293 to 297 (KPTSS), and Arg319 each bind FMN.

This sequence belongs to the chorismate synthase family. Homotetramer. It depends on FMNH2 as a cofactor.

The enzyme catalyses 5-O-(1-carboxyvinyl)-3-phosphoshikimate = chorismate + phosphate. It participates in metabolic intermediate biosynthesis; chorismate biosynthesis; chorismate from D-erythrose 4-phosphate and phosphoenolpyruvate: step 7/7. In terms of biological role, catalyzes the anti-1,4-elimination of the C-3 phosphate and the C-6 proR hydrogen from 5-enolpyruvylshikimate-3-phosphate (EPSP) to yield chorismate, which is the branch point compound that serves as the starting substrate for the three terminal pathways of aromatic amino acid biosynthesis. This reaction introduces a second double bond into the aromatic ring system. In Shigella boydii serotype 18 (strain CDC 3083-94 / BS512), this protein is Chorismate synthase.